A 340-amino-acid chain; its full sequence is Coproporphyrin III ferrochelatase (340 aa).

The Fe-coproporphyrin III site is built by S52 and Y116. 2 residues coordinate Fe(2+): H172 and E255.

It belongs to the ferrochelatase family.

The protein localises to the cytoplasm. It catalyses the reaction Fe-coproporphyrin III + 2 H(+) = coproporphyrin III + Fe(2+). Its pathway is porphyrin-containing compound metabolism; protoheme biosynthesis. Its function is as follows. Involved in coproporphyrin-dependent heme b biosynthesis. Catalyzes the insertion of ferrous iron into coproporphyrin III to form Fe-coproporphyrin III. The chain is Coproporphyrin III ferrochelatase from Mycobacterium ulcerans (strain Agy99).